A 217-amino-acid polypeptide reads, in one-letter code: Cytochrome b5 domain-containing protein 1 (217 aa).

Residues Pro-6–His-72 enclose the Cytochrome b5 heme-binding domain. 2 residues coordinate heme: His-41 and His-72.

Belongs to the cytochrome b5 family.

Its subcellular location is the cytoplasm. It localises to the cytoskeleton. The protein localises to the cilium axoneme. In terms of biological role, radial spoke stalk protein that binds heme under oxidizing conditions. Required for the coordinated beating of multiple cilia maybe by functioning in a redox signaling pathway. The sequence is that of Cytochrome b5 domain-containing protein 1 (cyb5d1) from Xenopus laevis (African clawed frog).